The following is a 387-amino-acid chain: Alkanesulfonate monooxygenase (387 aa).

Belongs to the SsuD family.

The enzyme catalyses an alkanesulfonate + FMNH2 + O2 = an aldehyde + FMN + sulfite + H2O + 2 H(+). Functionally, catalyzes the desulfonation of aliphatic sulfonates. The polypeptide is Alkanesulfonate monooxygenase (Cupriavidus pinatubonensis (strain JMP 134 / LMG 1197) (Cupriavidus necator (strain JMP 134))).